A 175-amino-acid chain; its full sequence is Ribosome maturation factor RimM (175 aa).

Positions 97–169 (EDKFYFHEII…TVRVITPEGL (73 aa)) constitute a PRC barrel domain.

It belongs to the RimM family. As to quaternary structure, binds ribosomal protein uS19.

The protein resides in the cytoplasm. An accessory protein needed during the final step in the assembly of 30S ribosomal subunit, possibly for assembly of the head region. Essential for efficient processing of 16S rRNA. May be needed both before and after RbfA during the maturation of 16S rRNA. It has affinity for free ribosomal 30S subunits but not for 70S ribosomes. This Christiangramia forsetii (strain DSM 17595 / CGMCC 1.15422 / KT0803) (Gramella forsetii) protein is Ribosome maturation factor RimM.